A 523-amino-acid polypeptide reads, in one-letter code: MAAALQVLPCLLRAPSRPLLWGPPVARMTSGMALAEQARQLFDSAVGAVQPGPMLQRTLSLDPSGRQLKVRDRTFQLRENLYLVGFGKAVLGMAAAAEELLAQHLVQGVISVPKGIRAAMEHAGKKEMLLKPHSRVQVFEGAEDNLPDRDALRAALTIQQLAEGLTADDLLLVLISGGGSALLPAPIPPVTLEEKQMLTKLLAARGATIQELNTIRKALSQLKGGGLAQAAYPAQVISLILSDVIGDPLEVIASGPTVASAHSVQDCLHILNHYGLRAALPRSVKTVLSRADSDPHGPHTCGHVLNVIIGSNSLALAEAQRQAEVLGYHAMVLSTAMQGDVKRVARFYGLLARVAAAHLTPSLAERPLEEEAELHQLAAELQLPDLQLEEALEAVAKAKGPVCLLAGGEPTVQLQGSGKGGRNQELALHVGVELGRQPLGPIDVLFLSGGTDGQDGPTKVAGAWVMSDLISQASAESLDIATSLTNNDSYTFFCRFRGGTHLLHTGLTGTNVMDVHLLILHPQ.

At S60 the chain carries Phosphoserine. Position 200 is an N6-acetyllysine (K200).

Belongs to the glycerate kinase type-2 family. As to expression, expressed in the hippocampus, callus, brain, cerebellum, renal cortex interstitial cells, epithelium of interlobular bile duct and skeletal muscle.

The protein resides in the cytoplasm. It catalyses the reaction (R)-glycerate + ATP = (2R)-3-phosphoglycerate + ADP + H(+). The protein is Glycerate kinase (Glyctk) of Mus musculus (Mouse).